The primary structure comprises 214 residues: Mexicain (214 aa).

3 disulfides stabilise this stretch: Cys22–Cys63, Cys56–Cys95, and Cys153–Cys200. Cys25 is an active-site residue. E64 is bound at residue Cys25. Residues His159 and Asn175 contribute to the active site.

The protein belongs to the peptidase C1 family. Expressed in latex.

Its subcellular location is the secreted. Its function is as follows. Cysteine protease. The sequence is that of Mexicain from Jacaratia mexicana (Wild papaya).